The primary structure comprises 404 residues: Nicotinate phosphoribosyltransferase (404 aa).

Phosphohistidine; by autocatalysis is present on His224.

It belongs to the NAPRTase family. In terms of processing, transiently phosphorylated on a His residue during the reaction cycle. Phosphorylation strongly increases the affinity for substrates and increases the rate of nicotinate D-ribonucleotide production. Dephosphorylation regenerates the low-affinity form of the enzyme, leading to product release.

The enzyme catalyses nicotinate + 5-phospho-alpha-D-ribose 1-diphosphate + ATP + H2O = nicotinate beta-D-ribonucleotide + ADP + phosphate + diphosphate. It participates in cofactor biosynthesis; NAD(+) biosynthesis; nicotinate D-ribonucleotide from nicotinate: step 1/1. Functionally, catalyzes the synthesis of beta-nicotinate D-ribonucleotide from nicotinate and 5-phospho-D-ribose 1-phosphate at the expense of ATP. The polypeptide is Nicotinate phosphoribosyltransferase (Proteus mirabilis (strain HI4320)).